Reading from the N-terminus, the 445-residue chain is UPF0210 protein SP_0239 (445 aa).

This sequence belongs to the UPF0210 family. As to quaternary structure, homodimer.

The protein is UPF0210 protein SP_0239 of Streptococcus pneumoniae serotype 4 (strain ATCC BAA-334 / TIGR4).